We begin with the raw amino-acid sequence, 788 residues long: Integrin beta-6 (788 aa).

The first 21 residues, 1 to 21 (MGIELLCFFFLFLGRDDHVRG), serve as a signal peptide directing secretion. Residues 22–71 (GCAMEGAETCGDCLLIGPQCAWCSQENFTHPSGVSERCDTPANLLAKGCQ) form the PSI domain. Residues 22–709 (GCAMEGAETC…KDCPKPPNIP (688 aa)) lie on the Extracellular side of the membrane. 19 cysteine pairs are disulfide-bonded: Cys-23/Cys-41, Cys-31/Cys-454, Cys-34/Cys-59, Cys-44/Cys-70, Cys-197/Cys-204, Cys-252/Cys-293, Cys-394/Cys-406, Cys-426/Cys-452, Cys-456/Cys-476, Cys-467/Cys-479, Cys-481/Cys-490, Cys-492/Cys-519, Cys-502/Cys-517, Cys-511/Cys-522, Cys-524/Cys-537, Cys-539/Cys-560, Cys-544/Cys-558, Cys-552/Cys-563, and Cys-565/Cys-574. 2 N-linked (GlcNAc...) asparagine glycosylation sites follow: Asn-48 and Asn-97. The region spanning 131 to 371 (YPVDLYYLMD…QLIISAYEEL (241 aa)) is the VWFA domain. The Mg(2+) site is built by Asp-140, Ser-142, and Ser-144. Ca(2+) is bound by residues Ser-144, Asp-147, Asp-148, and Glu-179. Residues Asn-235, Asp-237, Pro-239, and Glu-240 each coordinate Ca(2+). Residue Glu-240 participates in Mg(2+) binding. Residue Asn-260 is glycosylated (N-linked (GlcNAc...) asparagine). Positions 271 and 355 each coordinate Ca(2+). 3 N-linked (GlcNAc...) asparagine glycosylation sites follow: Asn-387, Asn-396, and Asn-418. I-EGF domains follow at residues 456 to 491 (CQKE…PHCE), 492 to 538 (CGED…PYCQ), 539 to 575 (CDNF…EYCN), and 576 to 615 (CTTS…PTCE). Asn-463 and Asn-471 each carry an N-linked (GlcNAc...) asparagine glycan. N-linked (GlcNAc...) asparagine glycosylation occurs at Asn-541. An N-linked (GlcNAc...) asparagine glycan is attached at Asn-575. 9 disulfides stabilise this stretch: Cys-576–Cys-599, Cys-583–Cys-597, Cys-591–Cys-602, Cys-604–Cys-614, Cys-617–Cys-620, Cys-624–Cys-670, Cys-630–Cys-649, Cys-633–Cys-645, and Cys-678–Cys-702. A glycan (N-linked (GlcNAc...) asparagine) is linked at Asn-696. Residues 710 to 730 (MIMLGVSLAILLIGVVLLCIW) traverse the membrane as a helical segment. The tract at residues 731–758 (KLLVSFHDRKEVAKFEAERSKAKWQTGT) is interaction with HAX1. Over 731–788 (KLLVSFHDRKEVAKFEAERSKAKWQTGTNPLYRGSTSTFKNVTYKHRDKLKTDLSTDG) the chain is Cytoplasmic.

It belongs to the integrin beta chain family. Heterodimer of an alpha and a beta subunit. Interacts with FLNB. Interacts with HAX1. ITGAV:ITGB6 interacts with FBN1. ITGAV:ITGB6 interacts with TGFB1.

It is found in the cell membrane. Its subcellular location is the cell junction. The protein resides in the focal adhesion. In terms of biological role, integrin alpha-V:beta-6 (ITGAV:ITGB6) is a receptor for fibronectin and cytotactin. It recognizes the sequence R-G-D in its ligands. ITGAV:ITGB6 acts as a receptor for fibrillin-1 (FBN1) and mediates R-G-D-dependent cell adhesion to FBN1. Integrin alpha-V:beta-6 (ITGAV:ITGB6) mediates R-G-D-dependent release of transforming growth factor beta-1 (TGF-beta-1) from regulatory Latency-associated peptide (LAP), thereby playing a key role in TGF-beta-1 activation. This is Integrin beta-6 (ITGB6) from Cavia porcellus (Guinea pig).